The chain runs to 116 residues: Iron-sulfur cluster insertion protein ErpA (116 aa).

Iron-sulfur cluster-binding residues include cysteine 44, cysteine 108, and cysteine 110.

This sequence belongs to the HesB/IscA family. As to quaternary structure, homodimer. Iron-sulfur cluster is required as a cofactor.

Its function is as follows. Required for insertion of 4Fe-4S clusters for at least IspG. This chain is Iron-sulfur cluster insertion protein ErpA, found in Shewanella piezotolerans (strain WP3 / JCM 13877).